A 235-amino-acid chain; its full sequence is MSNTLYNHCTKLFQSIQRSLDELERGVQDESNTISLAGIQGQISASFLSLSRSIDDYDSMVQRELVPAKKKKATIRIQEFRQKHVQLLEKFDELKAHVRDIAQAKNRKELLGRRGYVNSLDSPYGNSTTDAEIVEGPSDLSRQDGLLKEHDFLGRAESQVDEFLERGRMILGDLVEQGSVLKATKTKVLNAANTLGITRHTLSLINRRSKQDKIIFYCGAFLVFVLFYLIYRWLR.

The Cytoplasmic segment spans residues 1–213 (MSNTLYNHCT…LINRRSKQDK (213 aa)). The helical; Anchor for type IV membrane protein transmembrane segment at 214–234 (IIFYCGAFLVFVLFYLIYRWL) threads the bilayer. Residue Arg-235 is a topological domain, vesicular.

It belongs to the BOS1 family. In terms of assembly, component of a SNARE complex consisting of sed5, bos1, bet1 and sec22 or ykt6. Interacts with YIF1 and YIP1.

The protein localises to the golgi apparatus membrane. The protein resides in the endoplasmic reticulum membrane. Its function is as follows. SNARE required for targeting and fusion of ER-derived transport vesicles with the Golgi complex. The protein is Protein transport protein bos1 (bos1) of Schizosaccharomyces pombe (strain 972 / ATCC 24843) (Fission yeast).